The following is a 236-amino-acid chain: Pyridoxine 5'-phosphate synthase (236 aa).

Asparagine 7 contributes to the 3-amino-2-oxopropyl phosphate binding site. 9-10 (DH) contributes to the 1-deoxy-D-xylulose 5-phosphate binding site. Position 18 (arginine 18) interacts with 3-amino-2-oxopropyl phosphate. Histidine 43 (proton acceptor) is an active-site residue. Residues arginine 45 and histidine 50 each contribute to the 1-deoxy-D-xylulose 5-phosphate site. Catalysis depends on glutamate 69, which acts as the Proton acceptor. Threonine 99 is a binding site for 1-deoxy-D-xylulose 5-phosphate. Residue histidine 190 is the Proton donor of the active site. Residues glycine 191 and 212-213 (GH) each bind 3-amino-2-oxopropyl phosphate.

The protein belongs to the PNP synthase family. As to quaternary structure, homooctamer; tetramer of dimers.

The protein localises to the cytoplasm. It catalyses the reaction 3-amino-2-oxopropyl phosphate + 1-deoxy-D-xylulose 5-phosphate = pyridoxine 5'-phosphate + phosphate + 2 H2O + H(+). It participates in cofactor biosynthesis; pyridoxine 5'-phosphate biosynthesis; pyridoxine 5'-phosphate from D-erythrose 4-phosphate: step 5/5. Functionally, catalyzes the complicated ring closure reaction between the two acyclic compounds 1-deoxy-D-xylulose-5-phosphate (DXP) and 3-amino-2-oxopropyl phosphate (1-amino-acetone-3-phosphate or AAP) to form pyridoxine 5'-phosphate (PNP) and inorganic phosphate. The chain is Pyridoxine 5'-phosphate synthase from Desulfosudis oleivorans (strain DSM 6200 / JCM 39069 / Hxd3) (Desulfococcus oleovorans).